The primary structure comprises 351 residues: Protein EXPRESSION OF TERPENOIDS 1 (351 aa).

Residues 1–23 (MANFFSLGGNQEQQHQEISSSQA) are disordered. Positions 11-22 (QEQQHQEISSSQ) are enriched in low complexity. C129, C132, C140, C145, C149, and C156 together coordinate Zn(2+). A DNA-binding region (zn(2)-C6 fungal-type; degenerate) is located at residues 129 to 156 (CQDCGNQAKKDCQHMRCRTCCKSRGFQC). Residues 170–219 (RRERQQQLAALQQQQQGHNNNNNNHKNKRQREDPSASSLVSTRLPSNTNG) form a disordered region. Low complexity predominate over residues 175–193 (QQLAALQQQQQGHNNNNNN). Polar residues predominate over residues 204 to 219 (SASSLVSTRLPSNTNG). A Required for homo- and heterodimerization motif is present at residues 258-261 (IGGH). The disordered stretch occupies residues 286–320 (TSSGGSAGGVQHHHHNSAAVATATTTSGGDATAAG). Positions 303 to 320 (AAVATATTTSGGDATAAG) are enriched in low complexity.

This sequence belongs to the SHI protein family. Forms homodimers and heterodimers with LRP1.

Its subcellular location is the nucleus. Its function is as follows. Transcription activator involved in the transcriptional regulation of terpene biosynthesis in glandular trichomes. Binds to the promoter of the linalool synthase TPS5 and promotes TPS5 gene transactivation. Acts synergistically with MYC1 in the transactivation of TPS5. The protein is Protein EXPRESSION OF TERPENOIDS 1 of Solanum lycopersicum (Tomato).